We begin with the raw amino-acid sequence, 240 residues long: Adenosylcobinamide-GDP ribazoletransferase (240 aa).

5 consecutive transmembrane segments (helical) span residues 31 to 51 (LLYYPLVGLLFGLLLWLASHL), 62 to 81 (ALLLTLWVLLSGALHLDGLA), 109 to 129 (IAVVTLVLVLLLKFCALWVLV), 133 to 153 (IGAQLLLAPLIGRAAMLGLFL), and 179 to 199 (VLLVCVLFCLFLGGWSVLLAL).

This sequence belongs to the CobS family. Mg(2+) serves as cofactor.

It is found in the cell inner membrane. The enzyme catalyses alpha-ribazole + adenosylcob(III)inamide-GDP = adenosylcob(III)alamin + GMP + H(+). The catalysed reaction is alpha-ribazole 5'-phosphate + adenosylcob(III)inamide-GDP = adenosylcob(III)alamin 5'-phosphate + GMP + H(+). It functions in the pathway cofactor biosynthesis; adenosylcobalamin biosynthesis; adenosylcobalamin from cob(II)yrinate a,c-diamide: step 7/7. Joins adenosylcobinamide-GDP and alpha-ribazole to generate adenosylcobalamin (Ado-cobalamin). Also synthesizes adenosylcobalamin 5'-phosphate from adenosylcobinamide-GDP and alpha-ribazole 5'-phosphate. This chain is Adenosylcobinamide-GDP ribazoletransferase, found in Pseudomonas putida (strain ATCC 700007 / DSM 6899 / JCM 31910 / BCRC 17059 / LMG 24140 / F1).